A 127-amino-acid chain; its full sequence is MNARINAEEIIRSIEAAHMKSDLPEIHVGDQVRVGVRIQEGGKERVQAFEGTVIAMRHSGCNRTITVRKIFQGIGVERVFLVHSPRIDSIQVLRRGKVRRAKLFYLRNRVGKATRIKAKTDSKEETL.

Belongs to the bacterial ribosomal protein bL19 family.

Its function is as follows. This protein is located at the 30S-50S ribosomal subunit interface and may play a role in the structure and function of the aminoacyl-tRNA binding site. In Synechococcus sp. (strain JA-3-3Ab) (Cyanobacteria bacterium Yellowstone A-Prime), this protein is Large ribosomal subunit protein bL19.